Consider the following 95-residue polypeptide: Aspartyl/glutamyl-tRNA(Asn/Gln) amidotransferase subunit C (95 aa).

Belongs to the GatC family. As to quaternary structure, heterotrimer of A, B and C subunits.

It carries out the reaction L-glutamyl-tRNA(Gln) + L-glutamine + ATP + H2O = L-glutaminyl-tRNA(Gln) + L-glutamate + ADP + phosphate + H(+). It catalyses the reaction L-aspartyl-tRNA(Asn) + L-glutamine + ATP + H2O = L-asparaginyl-tRNA(Asn) + L-glutamate + ADP + phosphate + 2 H(+). Functionally, allows the formation of correctly charged Asn-tRNA(Asn) or Gln-tRNA(Gln) through the transamidation of misacylated Asp-tRNA(Asn) or Glu-tRNA(Gln) in organisms which lack either or both of asparaginyl-tRNA or glutaminyl-tRNA synthetases. The reaction takes place in the presence of glutamine and ATP through an activated phospho-Asp-tRNA(Asn) or phospho-Glu-tRNA(Gln). This chain is Aspartyl/glutamyl-tRNA(Asn/Gln) amidotransferase subunit C, found in Pelodictyon phaeoclathratiforme (strain DSM 5477 / BU-1).